The primary structure comprises 358 residues: Peptide chain release factor 1 (358 aa).

An N5-methylglutamine modification is found at Gln232.

This sequence belongs to the prokaryotic/mitochondrial release factor family. Methylated by PrmC. Methylation increases the termination efficiency of RF1.

It localises to the cytoplasm. Functionally, peptide chain release factor 1 directs the termination of translation in response to the peptide chain termination codons UAG and UAA. The sequence is that of Peptide chain release factor 1 from Acidobacterium capsulatum (strain ATCC 51196 / DSM 11244 / BCRC 80197 / JCM 7670 / NBRC 15755 / NCIMB 13165 / 161).